The primary structure comprises 533 residues: D-3-phosphoglycerate dehydrogenase (533 aa).

The residue at position 2 (A2) is an N-acetylalanine. S14 is modified (phosphoserine). K21 carries the post-translational modification N6-acetyllysine; alternate. A Glycyl lysine isopeptide (Lys-Gly) (interchain with G-Cter in SUMO1); alternate cross-link involves residue K21. K21 participates in a covalent cross-link: Glycyl lysine isopeptide (Lys-Gly) (interchain with G-Cter in SUMO2); alternate. At K58 the chain carries N6-acetyllysine. NAD(+)-binding positions include T78, 155-156 (RI), D175, T207, 234-236 (CAR), and D260. T78 is subject to Phosphothreonine. The active site involves R236. Residue E265 is part of the active site. The active-site Proton donor is H283. An NAD(+)-binding site is contributed by 283–286 (HLGA).

The protein belongs to the D-isomer specific 2-hydroxyacid dehydrogenase family. In terms of assembly, homotetramer.

The catalysed reaction is (2R)-3-phosphoglycerate + NAD(+) = 3-phosphooxypyruvate + NADH + H(+). It carries out the reaction (R)-2-hydroxyglutarate + NAD(+) = 2-oxoglutarate + NADH + H(+). The enzyme catalyses (S)-malate + NAD(+) = oxaloacetate + NADH + H(+). The protein operates within amino-acid biosynthesis; L-serine biosynthesis; L-serine from 3-phospho-D-glycerate: step 1/3. In terms of biological role, catalyzes the reversible oxidation of 3-phospho-D-glycerate to 3-phosphonooxypyruvate, the first step of the phosphorylated L-serine biosynthesis pathway. Also catalyzes the reversible oxidation of 2-hydroxyglutarate to 2-oxoglutarate and the reversible oxidation of (S)-malate to oxaloacetate. The protein is D-3-phosphoglycerate dehydrogenase (PHGDH) of Homo sapiens (Human).